A 605-amino-acid chain; its full sequence is Methyl-CpG-binding domain protein 1 (605 aa).

The MBD domain maps to 1-69; it reads MAEDWLDCPA…TLFDFKQGIL (69 aa). The interval 80-123 is disordered; it reads AVASKKRKKPSRPAKTRKRQVGPQSGEVRKEAPRDETKADTDTA. Positions 83 to 99 are enriched in basic residues; sequence SKKRKKPSRPAKTRKRQ. A Nuclear localization signal motif is present at residues 84 to 88; that stretch reads KKRKK. Positions 106-120 are enriched in basic and acidic residues; it reads EVRKEAPRDETKADT. Lysine 117 is covalently cross-linked (Glycyl lysine isopeptide (Lys-Gly) (interchain with G-Cter in SUMO2)). 2 CXXC-type zinc fingers span residues 169-216 and 217-263; these read RMFK…RRCL and RIVE…RRCL. Zn(2+) is bound by residues cysteine 176, cysteine 179, cysteine 182, cysteine 188, cysteine 191, cysteine 194, cysteine 210, cysteine 215, cysteine 225, cysteine 228, cysteine 231, cysteine 237, cysteine 240, cysteine 243, cysteine 257, and cysteine 262. The interval 269 to 308 is disordered; the sequence is RRKGGCDSKMAARRRPGAQPLPPPPPSQSPEPTEPHPRAL. Lysine 277 is covalently cross-linked (Glycyl lysine isopeptide (Lys-Gly) (interchain with G-Cter in SUMO2)). The segment covering 287–297 has biased composition (pro residues); that stretch reads QPLPPPPPSQS. Serine 297 carries the phosphoserine modification. A CXXC-type 3 zinc finger spans residues 330-378; sequence TNRRQNRKCGACAACLRRMDCGRCDFCCDKPKFGGSNQKRQKCRWRQCL. Cysteine 338, cysteine 341, cysteine 344, cysteine 350, cysteine 353, cysteine 356, cysteine 372, and cysteine 377 together coordinate Zn(2+). Serine 391 and serine 399 each carry phosphoserine. The tract at residues 391–451 is disordered; that stretch reads SESEDGAGSP…EAGGGFVLPP (61 aa). Over residues 403–417 the composition is skewed to basic residues; sequence YRRRKRPSSARRHHL. A Glycyl lysine isopeptide (Lys-Gly) (interchain with G-Cter in SUMO2) cross-link involves residue lysine 422. Positions 426–439 are enriched in polar residues; sequence ATRTAQPDHTQAPT. A Glycyl lysine isopeptide (Lys-Gly) (interchain with G-Cter in SUMO2) cross-link involves residue lysine 440. Residues lysine 499 and lysine 538 each participate in a glycyl lysine isopeptide (Lys-Gly) (interchain with G-Cter in SUMO2); alternate cross-link. The interval 520–573 is disordered; sequence VLVPGCPSKAVDPGLPSVKQEPPDPEEDKEENKDDSASKLAPEEEAGGAGTPVI. Positions 529 to 592 are transcriptional repression domain (TRD); that stretch reads AVDPGLPSVK…RFRDTAVWLP (64 aa). A Glycyl lysine isopeptide (Lys-Gly) (interchain with G-Cter in SUMO2) cross-link involves residue lysine 558.

In terms of assembly, interacts with OASL, ATF7IP, ATF7IP2 and BAHD1. Binds CHAF1A and the SUV39H1-CBX5 complex via the MBD domain. Binds MGP via the TRD domain. May be part of the MeCP1 complex. In terms of processing, sumoylated, sumoylation may increase interaction with ATF7IP. In terms of tissue distribution, widely expressed.

It localises to the nucleus. The protein resides in the nucleus matrix. Its subcellular location is the nucleus speckle. The protein localises to the chromosome. In terms of biological role, transcriptional repressor that binds CpG islands in promoters where the DNA is methylated at position 5 of cytosine within CpG dinucleotides. Binding is abolished by the presence of 7-mG that is produced by DNA damage by methylmethanesulfonate (MMS). Acts as transcriptional repressor and plays a role in gene silencing by recruiting ATF7IP, which in turn recruits factors such as the histone methyltransferase SETDB1. Probably forms a complex with SETDB1 and ATF7IP that represses transcription and couples DNA methylation and histone 'Lys-9' trimethylation. Isoform 1 and isoform 2 can also repress transcription from unmethylated promoters. The protein is Methyl-CpG-binding domain protein 1 of Homo sapiens (Human).